Here is a 259-residue protein sequence, read N- to C-terminus: Polycomb group RING finger protein 1 (259 aa).

An RING-type zinc finger spans residues 45-84 (CYLCAGYFIDATTITECLHTFCKSCIVKYLQTSKYCPLCN).

As to quaternary structure, component of a PRC1-like complex.

It localises to the nucleus. Component of a Polycomb group (PcG) multiprotein PRC1-like complex, a complex class required to maintain the transcriptionally repressive state of many genes, including Hox genes, throughout development. PcG PRC1 complex acts via chromatin remodeling and modification of histones; it mediates monoubiquitination of histone H2A 'Lys-119', rendering chromatin heritably changed in its expressibility. The polypeptide is Polycomb group RING finger protein 1 (pcgf1) (Xenopus tropicalis (Western clawed frog)).